Consider the following 102-residue polypeptide: N(4)-acetylcytidine amidohydrolase (102 aa).

In terms of domain architecture, ASCH spans 6 to 92 (TFFGRFEADI…VIKAIYPGLD (87 aa)). The active-site Proton acceptor is lysine 20. The active-site Nucleophile is threonine 23. Residue glutamate 73 is the Proton donor of the active site.

This sequence belongs to the N(4)-acetylcytidine amidohydrolase family.

It catalyses the reaction N(4)-acetylcytidine + H2O = cytidine + acetate + H(+). The enzyme catalyses N(4)-acetyl-2'-deoxycytidine + H2O = 2'-deoxycytidine + acetate + H(+). The catalysed reaction is N(4)-acetylcytosine + H2O = cytosine + acetate + H(+). Catalyzes the hydrolysis of N(4)-acetylcytidine (ac4C). The chain is N(4)-acetylcytidine amidohydrolase from Yersinia pseudotuberculosis serotype O:1b (strain IP 31758).